The primary structure comprises 511 residues: 2-isopropylmalate synthase (511 aa).

The Pyruvate carboxyltransferase domain maps to 5–267 (LFIFDTTLRD…DTRIDATQIV (263 aa)). Mn(2+)-binding residues include aspartate 14, histidine 202, histidine 204, and asparagine 238. The interval 393–511 (KLLSMKVCSE…SKRERAHPQV (119 aa)) is regulatory domain.

It belongs to the alpha-IPM synthase/homocitrate synthase family. LeuA type 1 subfamily. Homodimer. It depends on Mn(2+) as a cofactor.

The protein resides in the cytoplasm. The catalysed reaction is 3-methyl-2-oxobutanoate + acetyl-CoA + H2O = (2S)-2-isopropylmalate + CoA + H(+). Its pathway is amino-acid biosynthesis; L-leucine biosynthesis; L-leucine from 3-methyl-2-oxobutanoate: step 1/4. Its function is as follows. Catalyzes the condensation of the acetyl group of acetyl-CoA with 3-methyl-2-oxobutanoate (2-ketoisovalerate) to form 3-carboxy-3-hydroxy-4-methylpentanoate (2-isopropylmalate). The polypeptide is 2-isopropylmalate synthase (Thiobacillus denitrificans (strain ATCC 25259 / T1)).